Here is a 28-residue protein sequence, read N- to C-terminus: Putative fruR/shl operon leader peptide (28 aa).

The sequence is that of Putative fruR/shl operon leader peptide (fruL) from Escherichia coli O6:H1 (strain CFT073 / ATCC 700928 / UPEC).